We begin with the raw amino-acid sequence, 169 residues long: MSQLQQFCHNRFSWGLLLLSAIGLELAALFFQYGMDLAPCVMCIYIRVAVLGIILAALIGILQPKVWLLRLVGMAGWAVSAVWGFKLAYELNQMQVNPSPFATCSFYPEFPSFMPLDTWLPSVFSPTGMCSDSPWSWLSVSMAQWMMLGFAIYGVIWLLMLLPALKSAK.

The Cytoplasmic segment spans residues 1–13 (MSQLQQFCHNRFS). A helical membrane pass occupies residues 14-30 (WGLLLLSAIGLELAALF). At 31-48 (FQYGMDLAPCVMCIYIRV) the chain is on the periplasmic side. A disulfide bridge links Cys40 with Cys43. A helical transmembrane segment spans residues 49–64 (AVLGIILAALIGILQP). Residues 65 to 71 (KVWLLRL) lie on the Cytoplasmic side of the membrane. The chain crosses the membrane as a helical span at residues 72-89 (VGMAGWAVSAVWGFKLAY). At 90–144 (ELNQMQVNPSPFATCSFYPEFPSFMPLDTWLPSVFSPTGMCSDSPWSWLSVSMAQ) the chain is on the periplasmic side. The cysteines at positions 104 and 130 are disulfide-linked. A helical membrane pass occupies residues 145 to 163 (WMMLGFAIYGVIWLLMLLP). Residues 164 to 169 (ALKSAK) are Cytoplasmic-facing.

Belongs to the DsbB family.

It localises to the cell inner membrane. Required for disulfide bond formation in some periplasmic proteins. Acts by oxidizing the DsbA protein. The polypeptide is Disulfide bond formation protein B (Shewanella frigidimarina (strain NCIMB 400)).